Here is a 134-residue protein sequence, read N- to C-terminus: Crustacean hyperglycemic hormones isoform B (134 aa).

The N-terminal stretch at 1-24 (MFACRTLCLVVVMVASLGTSGVGG) is a signal peptide. Q61 is subject to Pyrrolidone carboxylic acid. F63 carries the post-translational modification D-phenylalanine; in form CHH-B-II. Disulfide bonds link C67–C103, C83–C99, and C86–C112. Position 132 is a valine amide (V132).

This sequence belongs to the arthropod CHH/MIH/GIH/VIH hormone family. In terms of processing, stereoinversion of L-Phe (form CHH-B-I) to D-Phe (form CHH-B-II). In terms of tissue distribution, produced by the medulla terminalis X-organ in the eyestalks and transported to the sinus gland where they are stored and released. Present also in the ventral nervous system.

It is found in the secreted. Hormone found in the sinus gland of isopods and decapods which controls the blood sugar level. Has a secretagogue action over the amylase released from the midgut gland. May act as a stress hormone and may be involved in the control of molting and reproduction. This Homarus americanus (American lobster) protein is Crustacean hyperglycemic hormones isoform B.